A 134-amino-acid polypeptide reads, in one-letter code: Large-conductance mechanosensitive channel (134 aa).

The next 2 helical transmembrane spans lie at 15–35 (IDLA…QSVV) and 80–100 (GNFI…FLAV).

This sequence belongs to the MscL family. In terms of assembly, homopentamer.

It localises to the cell inner membrane. In terms of biological role, channel that opens in response to stretch forces in the membrane lipid bilayer. May participate in the regulation of osmotic pressure changes within the cell. In Methylocella silvestris (strain DSM 15510 / CIP 108128 / LMG 27833 / NCIMB 13906 / BL2), this protein is Large-conductance mechanosensitive channel.